The primary structure comprises 267 residues: Ribonuclease HII (267 aa).

Residues 57 to 245 (WPVAGCDEVG…VVAARERHRA (189 aa)) form the RNase H type-2 domain. 3 residues coordinate a divalent metal cation: D63, E64, and D154.

The protein belongs to the RNase HII family. It depends on Mn(2+) as a cofactor. Mg(2+) is required as a cofactor.

Its subcellular location is the cytoplasm. The catalysed reaction is Endonucleolytic cleavage to 5'-phosphomonoester.. Endonuclease that specifically degrades the RNA of RNA-DNA hybrids. The protein is Ribonuclease HII of Nitrobacter hamburgensis (strain DSM 10229 / NCIMB 13809 / X14).